A 269-amino-acid polypeptide reads, in one-letter code: Energy-coupling factor transporter ATP-binding protein EcfA1 (269 aa).

The region spanning 8 to 242 (IVFKNVSFQY…AEGLTTIGLD (235 aa)) is the ABC transporter domain. 42–49 (GHNGSGKS) lines the ATP pocket.

This sequence belongs to the ABC transporter superfamily. Energy-coupling factor EcfA family. Forms a stable energy-coupling factor (ECF) transporter complex composed of 2 membrane-embedded substrate-binding proteins (S component), 2 ATP-binding proteins (A component) and 2 transmembrane proteins (T component).

The protein localises to the cell membrane. ATP-binding (A) component of a common energy-coupling factor (ECF) ABC-transporter complex. Unlike classic ABC transporters this ECF transporter provides the energy necessary to transport a number of different substrates. In Staphylococcus aureus (strain bovine RF122 / ET3-1), this protein is Energy-coupling factor transporter ATP-binding protein EcfA1.